Consider the following 325-residue polypeptide: MAGTQDPSSLEEILWRSPSHVQMMGGYLHSNNILFYFAESPFFDATSNNASLAIQANYNEAFRHFVETREAFEARLKTMQGLEFMVAYDPLQAAAGANAQFVHEPSNVWVIRKQTRRKRSGFEDEVVVLATFFVVGDCIYMAPSAASVIGNRILSAVTSLTSLLKTASTLPKFTPSHGHTYLPPAPKSTDVSHPSVQSQTSKENTPMPDADATNKSQSFTGSQNSSGPAVYDMRSLAESFSLVARYGDEFMDESPLMGEPGSFILSRPGDADRGAAPKQSQPSSTNAGGRVGTPLAKVDTPGKLSDKNSAAEEPKLRKKKSKPAS.

Disordered stretches follow at residues 175-230 and 253-325; these read PSHG…GPAV and ESPL…KPAS. 3 stretches are compositionally biased toward polar residues: residues 189 to 204, 213 to 227, and 278 to 287; these read TDVSHPSVQSQTSKEN, TNKSQSFTGSQNSSG, and KQSQPSSTNA. A compositionally biased stretch (basic and acidic residues) spans 304–315; that stretch reads LSDKNSAAEEPK. Over residues 316 to 325 the composition is skewed to basic residues; that stretch reads LRKKKSKPAS.

Belongs to the Mediator complex subunit 6 family. Component of the Mediator complex.

It localises to the nucleus. Component of the Mediator complex, a coactivator involved in the regulated transcription of nearly all RNA polymerase II-dependent genes. Mediator functions as a bridge to convey information from gene-specific regulatory proteins to the basal RNA polymerase II transcription machinery. Mediator is recruited to promoters by direct interactions with regulatory proteins and serves as a scaffold for the assembly of a functional preinitiation complex with RNA polymerase II and the general transcription factors. In Emericella nidulans (strain FGSC A4 / ATCC 38163 / CBS 112.46 / NRRL 194 / M139) (Aspergillus nidulans), this protein is Mediator of RNA polymerase II transcription subunit 6 (med6).